We begin with the raw amino-acid sequence, 382 residues long: Chaperone protein DnaJ 1 (382 aa).

Residues 4–68 (DYYGILGVDR…DKRRIVDMGG (65 aa)) enclose the J domain. The CR-type zinc-finger motif lies at 134–216 (GAKKDLTLDT…CAGDGRVRAR (83 aa)). C147, C150, C164, C167, C190, C193, C204, and C207 together coordinate Zn(2+). 4 CXXCXGXG motif repeats span residues 147–154 (CTKCHGSG), 164–171 (CGTCNGAG), 190–197 (CHTCDGTG), and 204–211 (CTECAGDG).

Belongs to the DnaJ family. As to quaternary structure, homodimer. Zn(2+) serves as cofactor.

The protein localises to the cytoplasm. In terms of biological role, participates actively in the response to hyperosmotic and heat shock by preventing the aggregation of stress-denatured proteins and by disaggregating proteins, also in an autonomous, DnaK-independent fashion. Unfolded proteins bind initially to DnaJ; upon interaction with the DnaJ-bound protein, DnaK hydrolyzes its bound ATP, resulting in the formation of a stable complex. GrpE releases ADP from DnaK; ATP binding to DnaK triggers the release of the substrate protein, thus completing the reaction cycle. Several rounds of ATP-dependent interactions between DnaJ, DnaK and GrpE are required for fully efficient folding. Also involved, together with DnaK and GrpE, in the DNA replication of plasmids through activation of initiation proteins. The chain is Chaperone protein DnaJ 1 from Corynebacterium glutamicum (strain ATCC 13032 / DSM 20300 / JCM 1318 / BCRC 11384 / CCUG 27702 / LMG 3730 / NBRC 12168 / NCIMB 10025 / NRRL B-2784 / 534).